The primary structure comprises 1178 residues: DNA-directed RNA polymerase subunit beta' (1178 aa).

Residues Cys-60, Cys-62, Cys-75, and Cys-78 each contribute to the Zn(2+) site. The Mg(2+) site is built by Asp-450, Asp-452, and Asp-454. Zn(2+) contacts are provided by Cys-795, Cys-869, Cys-876, and Cys-879.

Belongs to the RNA polymerase beta' chain family. As to quaternary structure, the RNAP catalytic core consists of 2 alpha, 1 beta, 1 beta' and 1 omega subunit. When a sigma factor is associated with the core the holoenzyme is formed, which can initiate transcription. It depends on Mg(2+) as a cofactor. Requires Zn(2+) as cofactor.

It catalyses the reaction RNA(n) + a ribonucleoside 5'-triphosphate = RNA(n+1) + diphosphate. Its function is as follows. DNA-dependent RNA polymerase catalyzes the transcription of DNA into RNA using the four ribonucleoside triphosphates as substrates. The protein is DNA-directed RNA polymerase subunit beta' of Clostridium botulinum (strain Okra / Type B1).